Here is a 436-residue protein sequence, read N- to C-terminus: 3-ketoacyl-CoA thiolase (436 aa).

Catalysis depends on Cys99, which acts as the Acyl-thioester intermediate. Catalysis depends on proton acceptor residues His392 and Cys422.

It belongs to the thiolase-like superfamily. Thiolase family. In terms of assembly, heterotetramer of two alpha chains (FadJ) and two beta chains (FadI).

The protein resides in the cytoplasm. The catalysed reaction is an acyl-CoA + acetyl-CoA = a 3-oxoacyl-CoA + CoA. It participates in lipid metabolism; fatty acid beta-oxidation. Functionally, catalyzes the final step of fatty acid oxidation in which acetyl-CoA is released and the CoA ester of a fatty acid two carbons shorter is formed. The chain is 3-ketoacyl-CoA thiolase from Escherichia coli O9:H4 (strain HS).